The sequence spans 295 residues: Acetylglutamate kinase (295 aa).

Residues 66–67 (GG), Arg88, and Asn193 each bind substrate.

It belongs to the acetylglutamate kinase family. ArgB subfamily.

It localises to the cytoplasm. The enzyme catalyses N-acetyl-L-glutamate + ATP = N-acetyl-L-glutamyl 5-phosphate + ADP. The protein operates within amino-acid biosynthesis; L-arginine biosynthesis; N(2)-acetyl-L-ornithine from L-glutamate: step 2/4. Its function is as follows. Catalyzes the ATP-dependent phosphorylation of N-acetyl-L-glutamate. This chain is Acetylglutamate kinase, found in Rhizobium etli (strain ATCC 51251 / DSM 11541 / JCM 21823 / NBRC 15573 / CFN 42).